A 192-amino-acid polypeptide reads, in one-letter code: Large ribosomal subunit protein uL24c (192 aa).

The transit peptide at Met-1–Met-47 directs the protein to the chloroplast.

As to quaternary structure, component of the chloroplast large ribosomal subunit (LSU). Mature 70S chloroplast ribosomes of higher plants consist of a small (30S) and a large (50S) subunit. The 30S small subunit contains 1 molecule of ribosomal RNA (16S rRNA) and 24 different proteins. The 50S large subunit contains 3 rRNA molecules (23S, 5S and 4.5S rRNA) and 33 different proteins.

Its subcellular location is the plastid. The protein resides in the chloroplast. Its function is as follows. Component of the chloroplast ribosome (chloro-ribosome), a dedicated translation machinery responsible for the synthesis of chloroplast genome-encoded proteins, including proteins of the transcription and translation machinery and components of the photosynthetic apparatus. The sequence is that of Large ribosomal subunit protein uL24c (RPL24) from Spinacia oleracea (Spinach).